Consider the following 225-residue polypeptide: LysM and putative peptidoglycan-binding domain-containing protein 1 (225 aa).

2 positions are modified to phosphoserine: S23 and S33. Residues 40–84 (LEHQLAPGDTLAGLALKYGVTMEQIKRANRLYTNDSIFLKKTLHI) form the LysM domain. The segment at 97–153 (LDSEEEKDGEEAVQPSKDEVRPHSAERKKRERGLGHANGEPLPTAGQEPARHDLSAS) is disordered. The span at 98 to 107 (DSEEEKDGEE) shows a compositional bias: acidic residues. S99 is modified (phosphoserine). Residues 112–121 (SKDEVRPHSA) show a composition bias toward basic and acidic residues. Residues S164, S179, S192, and S210 each carry the phosphoserine modification. The disordered stretch occupies residues 170–225 (AAQKLKKGESGIPGEDSSLHLSSPRMQQRAVLGPVPLTQTSRTRTLRDQEDEIFKL). Positions 214 to 225 (TLRDQEDEIFKL) are enriched in basic and acidic residues.

In Bos taurus (Bovine), this protein is LysM and putative peptidoglycan-binding domain-containing protein 1 (LYSMD1).